Reading from the N-terminus, the 314-residue chain is Serine protease 46 (314 aa).

One can recognise a Peptidase S1 domain in the interval 44 to 281; it reads VVNGKAVEVG…FTQWIKRQIG (238 aa). C69 and C85 are oxidised to a cystine. Residues H84 and D130 each act as charge relay system in the active site. Cystine bridges form between C164–C239, C197–C219, and C229–C257. The active-site Charge relay system is S233. The chain crosses the membrane as a helical span at residues 293 to 313; sequence FLSPFILTGYILLVSLGSLWL.

The protein belongs to the peptidase S1 family.

Its subcellular location is the membrane. This is Serine protease 46 (Prss46) from Mus musculus (Mouse).